A 1496-amino-acid chain; its full sequence is DNA-directed RNA polymerase subunit beta' (1496 aa).

The Zn(2+) site is built by Cys67, Cys69, Cys82, and Cys85. Residues Asp499, Asp501, and Asp503 each coordinate Mg(2+). Zn(2+) contacts are provided by Cys867, Cys943, Cys950, and Cys953.

The protein belongs to the RNA polymerase beta' chain family. In terms of assembly, the RNAP catalytic core consists of 2 alpha, 1 beta, 1 beta' and 1 omega subunit. When a sigma factor is associated with the core the holoenzyme is formed, which can initiate transcription. It depends on Mg(2+) as a cofactor. The cofactor is Zn(2+).

The enzyme catalyses RNA(n) + a ribonucleoside 5'-triphosphate = RNA(n+1) + diphosphate. Its function is as follows. DNA-dependent RNA polymerase catalyzes the transcription of DNA into RNA using the four ribonucleoside triphosphates as substrates. This is DNA-directed RNA polymerase subunit beta' from Chlorobium limicola (strain DSM 245 / NBRC 103803 / 6330).